Here is a 312-residue protein sequence, read N- to C-terminus: MKLFAGNAIPELAQLIANRLYTSLGVAAVNRFSDGEISVQINENVRGGDLFIIQSTCAPTNDNLMELVVMVDALRRASAGRITAVMPYFGYSRQDRRVRSARVPITAKVVADFLSSVGVDRVLTVDLHAEQIQGFFDVPVDNVFGSPILLEDMLQQDFNNPIVVSPDIGGVVRARAIAKLLNDTDMAIIDKRRPRANMSQVMHIIGEVADRDCVLVDDMIDTSSTLCKAAEALKEHGAKRVFAYATHPIFSGQAHANIKNSVIDEVIICDTIPLNSAIKALPNVRTLTLSGMLAEAIRRISNEESISAMFEH.

Residues Asp34–Glu36 and Arg93–Gln94 contribute to the ATP site. Residues His128 and Asp167 each contribute to the Mg(2+) site. Residue Lys191 is part of the active site. D-ribose 5-phosphate contacts are provided by Arg193 and Asp217.

Belongs to the ribose-phosphate pyrophosphokinase family. Class I subfamily. In terms of assembly, homohexamer. Mg(2+) is required as a cofactor.

It is found in the cytoplasm. The enzyme catalyses D-ribose 5-phosphate + ATP = 5-phospho-alpha-D-ribose 1-diphosphate + AMP + H(+). Its pathway is metabolic intermediate biosynthesis; 5-phospho-alpha-D-ribose 1-diphosphate biosynthesis; 5-phospho-alpha-D-ribose 1-diphosphate from D-ribose 5-phosphate (route I): step 1/1. In terms of biological role, involved in the biosynthesis of the central metabolite phospho-alpha-D-ribosyl-1-pyrophosphate (PRPP) via the transfer of pyrophosphoryl group from ATP to 1-hydroxyl of ribose-5-phosphate (Rib-5-P). The chain is Ribose-phosphate pyrophosphokinase from Baumannia cicadellinicola subsp. Homalodisca coagulata.